We begin with the raw amino-acid sequence, 156 residues long: 3-dehydroquinate dehydratase (156 aa).

Tyr-31 functions as the Proton acceptor in the catalytic mechanism. Substrate contacts are provided by Asn-83, His-89, and Asp-96. The active-site Proton donor is His-109. Substrate is bound by residues 110 to 111 (LS) and Arg-120.

It belongs to the type-II 3-dehydroquinase family. Homododecamer.

The enzyme catalyses 3-dehydroquinate = 3-dehydroshikimate + H2O. The protein operates within metabolic intermediate biosynthesis; chorismate biosynthesis; chorismate from D-erythrose 4-phosphate and phosphoenolpyruvate: step 3/7. Its function is as follows. Catalyzes a trans-dehydration via an enolate intermediate. The sequence is that of 3-dehydroquinate dehydratase from Chromobacterium violaceum (strain ATCC 12472 / DSM 30191 / JCM 1249 / CCUG 213 / NBRC 12614 / NCIMB 9131 / NCTC 9757 / MK).